A 272-amino-acid polypeptide reads, in one-letter code: HMP-PP phosphatase (272 aa).

Asp8 functions as the Nucleophile in the catalytic mechanism. Mg(2+) contacts are provided by Asp8, Asp10, and Asp212.

Belongs to the HAD-like hydrolase superfamily. Cof family. Mg(2+) is required as a cofactor.

The catalysed reaction is 4-amino-2-methyl-5-(diphosphooxymethyl)pyrimidine + H2O = 4-amino-2-methyl-5-(phosphooxymethyl)pyrimidine + phosphate + H(+). Functionally, catalyzes the hydrolysis of 4-amino-2-methyl-5-hydroxymethylpyrimidine pyrophosphate (HMP-PP) to 4-amino-2-methyl-5-hydroxymethylpyrimidine phosphate (HMP-P). This chain is HMP-PP phosphatase, found in Escherichia coli O157:H7.